The sequence spans 154 residues: MGLSDGEWQLVLNVWGKVEADIPSHGQEVLISLFKGHPETLEKFDKFKHLKSEDEMKASEELKKHGATVLTALGGILKKKGQHEAELKPLAQSHATKHKIPVKYLEFISDAIVHVLQKKHPGDFGADAQGAMKKALELFRNDMAAKYKELGFQG.

One can recognise a Globin domain in the interval 2 to 148 (GLSDGEWQLV…FRNDMAAKYK (147 aa)). Ser-4 carries the post-translational modification Phosphoserine. His-65 contacts nitrite. His-65 is a binding site for O2. The residue at position 68 (Thr-68) is a Phosphothreonine. His-94 serves as a coordination point for heme b.

It belongs to the globin family. As to quaternary structure, monomeric.

The protein resides in the cytoplasm. It localises to the sarcoplasm. It carries out the reaction Fe(III)-heme b-[protein] + nitric oxide + H2O = Fe(II)-heme b-[protein] + nitrite + 2 H(+). The catalysed reaction is H2O2 + AH2 = A + 2 H2O. Functionally, monomeric heme protein which primary function is to store oxygen and facilitate its diffusion within muscle tissues. Reversibly binds oxygen through a pentacoordinated heme iron and enables its timely and efficient release as needed during periods of heightened demand. Depending on the oxidative conditions of tissues and cells, and in addition to its ability to bind oxygen, it also has a nitrite reductase activity whereby it regulates the production of bioactive nitric oxide. Under stress conditions, like hypoxia and anoxia, it also protects cells against reactive oxygen species thanks to its pseudoperoxidase activity. The protein is Myoglobin (MB) of Sapajus apella (Brown-capped capuchin).